A 2338-amino-acid polypeptide reads, in one-letter code: Proto-oncogene tyrosine-protein kinase ROS (2338 aa).

The N-terminal stretch at 1–27 is a signal peptide; sequence MKRIRWLTPKPATFVVLGCVWISVAQG. The Extracellular segment spans residues 28-1853; the sequence is TILSSCLTSC…EDGFWITETS (1826 aa). N-linked (GlcNAc...) asparagine glycans are attached at residues N52 and N77. Fibronectin type-III domains follow at residues 110-205 and 206-294; these read LPTA…VPET and APFI…PSPA. N-linked (GlcNAc...) asparagine glycans are attached at residues N333, N361, N480, N623, N934, and N1010. The Fibronectin type-III 3 domain occupies 566–666; the sequence is LPGHPQEVSV…EPSVGTTLVP (101 aa). 2 consecutive Fibronectin type-III domains span residues 942-1037 and 1038-1145; these read IPDS…SVPS and APEN…TSEI. N-linked (GlcNAc...) asparagine glycosylation is present at N1298. Fibronectin type-III domains follow at residues 1440 to 1548, 1549 to 1648, 1650 to 1743, and 1744 to 1845; these read VASN…TKSG, VPGA…VNMF, TPEK…TKAG, and VPSK…LVED. N-linked (GlcNAc...) asparagine glycosylation is present at N1675. A helical membrane pass occupies residues 1854-1874; that stretch reads FILTIIVGIFLVATVPLTFVW. Over 1875 to 2338 the chain is Cytoplasmic; sequence HRSLKNHKAT…AHSGHGDVSE (464 aa). A Protein kinase domain is found at 1937–2210; sequence LSLRLLLGSG…YNIQDQLQLF (274 aa). ATP is bound by residues 1943–1951 and K1972; that span reads LGSGAFGEV. D2071 (proton acceptor) is an active-site residue. Position 2266 is a phosphotyrosine; by autocatalysis (Y2266). The disordered stretch occupies residues 2277-2314; it reads EDRYEGPLGSKESGLHDLKKDERQPADKDFCQQPQVAY. Basic and acidic residues predominate over residues 2289 to 2306; that stretch reads SGLHDLKKDERQPADKDF. Residue Y2325 is modified to Phosphotyrosine; by autocatalysis.

The protein belongs to the protein kinase superfamily. Tyr protein kinase family. Insulin receptor subfamily. As to quaternary structure, interacts with PTPN11; may activate the PI3 kinase-mTOR signaling pathway. Interacts with VAV3; constitutive interaction mediating VAV3 phosphorylation. Interacts with PTPN6 (via SH2 1 domain); the interaction is direct and promotes ROS1 dephosphorylation. In terms of processing, phosphorylated. Probably autophosphorylates. Phosphorylation at Tyr-2266 is required for the interaction with PTPN6 that mediates ROS1 dephosphorylation. Phosphorylation at Tyr-2266 stimulates the kinase activity and the activation of the ERK1 signaling cascade. Phosphorylation at Tyr-2266 and/or Tyr-2325 recruits PTPN11. Expressed in heart, lung, kidney and testis.

The protein localises to the cell membrane. It carries out the reaction L-tyrosyl-[protein] + ATP = O-phospho-L-tyrosyl-[protein] + ADP + H(+). Its activity is regulated as follows. Inhibited by dephosphorylation by PTPN6. Orphan receptor tyrosine kinase (RTK) that plays a role in epithelial cell differentiation and regionalization of the proximal epididymal epithelium. NELL2 is an endogenous ligand for ROS1. Upon endogenous stimulation by NELL2, ROS1 activates the intracellular signaling pathway and triggers epididymal epithelial differentiation and subsequent sperm maturation. May activate several downstream signaling pathways related to cell differentiation, proliferation, growth and survival including the PI3 kinase-mTOR signaling pathway. Mediates the phosphorylation of PTPN11, an activator of this pathway. May also phosphorylate and activate the transcription factor STAT3 to control anchorage-independent cell growth. Mediates the phosphorylation and the activation of VAV3, a guanine nucleotide exchange factor regulating cell morphology. May activate other downstream signaling proteins including AKT1, MAPK1, MAPK3, IRS1 and PLCG2. The protein is Proto-oncogene tyrosine-protein kinase ROS (Ros1) of Rattus norvegicus (Rat).